A 420-amino-acid chain; its full sequence is UDP-N-acetylglucosamine 1-carboxyvinyltransferase (420 aa).

22 to 23 is a binding site for phosphoenolpyruvate; it reads KN. Arg-92 provides a ligand contact to UDP-N-acetyl-alpha-D-glucosamine. The active-site Proton donor is Cys-116. Cys-116 is subject to 2-(S-cysteinyl)pyruvic acid O-phosphothioketal. UDP-N-acetyl-alpha-D-glucosamine is bound by residues 121–125, 161–164, Asp-306, and Ile-328; these read RPVDL and KVSV.

The protein belongs to the EPSP synthase family. MurA subfamily.

It is found in the cytoplasm. It catalyses the reaction phosphoenolpyruvate + UDP-N-acetyl-alpha-D-glucosamine = UDP-N-acetyl-3-O-(1-carboxyvinyl)-alpha-D-glucosamine + phosphate. Its pathway is cell wall biogenesis; peptidoglycan biosynthesis. Its function is as follows. Cell wall formation. Adds enolpyruvyl to UDP-N-acetylglucosamine. This Yersinia pseudotuberculosis serotype O:1b (strain IP 31758) protein is UDP-N-acetylglucosamine 1-carboxyvinyltransferase.